A 388-amino-acid chain; its full sequence is Pepsin A-3 (388 aa).

A signal peptide spans 1–15 (MKWLLLLGLVALSEC). Residues 16 to 62 (IMYKVPLIRKKSLRRTLSERGLLKDFLKKHNLNPARKYFPQWKAPTL) constitute a propeptide, activation peptide. The region spanning 76–385 (YFGTIGIGTP…DRANNQVGLA (310 aa)) is the Peptidase A1 domain. Asp94 is a catalytic residue. Cystine bridges form between Cys107/Cys112 and Cys268/Cys272. Asp277 is a catalytic residue. The cysteines at positions 311 and 344 are disulfide-linked.

This sequence belongs to the peptidase A1 family.

It is found in the secreted. It catalyses the reaction Preferential cleavage: hydrophobic, preferably aromatic, residues in P1 and P1' positions. Cleaves 1-Phe-|-Val-2, 4-Gln-|-His-5, 13-Glu-|-Ala-14, 14-Ala-|-Leu-15, 15-Leu-|-Tyr-16, 16-Tyr-|-Leu-17, 23-Gly-|-Phe-24, 24-Phe-|-Phe-25 and 25-Phe-|-Tyr-26 bonds in the B chain of insulin.. Its function is as follows. Shows particularly broad specificity; although bonds involving phenylalanine and leucine are preferred, many others are also cleaved to some extent. This is Pepsin A-3 (PGA3) from Homo sapiens (Human).